We begin with the raw amino-acid sequence, 78 residues long: Small ribosomal subunit protein uS17 (78 aa).

Belongs to the universal ribosomal protein uS17 family. In terms of assembly, part of the 30S ribosomal subunit.

In terms of biological role, one of the primary rRNA binding proteins, it binds specifically to the 5'-end of 16S ribosomal RNA. The protein is Small ribosomal subunit protein uS17 of Agrobacterium fabrum (strain C58 / ATCC 33970) (Agrobacterium tumefaciens (strain C58)).